The chain runs to 409 residues: Argininosuccinate synthase (409 aa).

An ATP-binding site is contributed by 9 to 17 (AYSGGLDTS). Tyr86 lines the L-citrulline pocket. Gly116 is a binding site for ATP. Thr118, Asn122, and Asp123 together coordinate L-aspartate. Asn122 serves as a coordination point for L-citrulline. L-citrulline contacts are provided by Arg126, Ser174, Ser183, Glu259, and Tyr271.

It belongs to the argininosuccinate synthase family. Type 1 subfamily. In terms of assembly, homotetramer.

It localises to the cytoplasm. The catalysed reaction is L-citrulline + L-aspartate + ATP = 2-(N(omega)-L-arginino)succinate + AMP + diphosphate + H(+). Its pathway is amino-acid biosynthesis; L-arginine biosynthesis; L-arginine from L-ornithine and carbamoyl phosphate: step 2/3. The sequence is that of Argininosuccinate synthase from Halalkalibacterium halodurans (strain ATCC BAA-125 / DSM 18197 / FERM 7344 / JCM 9153 / C-125) (Bacillus halodurans).